A 324-amino-acid chain; its full sequence is Tubulin alpha-8 chain (324 aa).

Residues Ser-15, Gly-19, Thr-20, Thr-54, Asn-81, and Asn-103 each contribute to the GTP site. Glu-129 is an active-site residue.

This sequence belongs to the tubulin family. Dimer of alpha and beta chains. A typical microtubule is a hollow water-filled tube with an outer diameter of 25 nm and an inner diameter of 15 nM. Alpha-beta heterodimers associate head-to-tail to form protofilaments running lengthwise along the microtubule wall with the beta-tubulin subunit facing the microtubule plus end conferring a structural polarity. Microtubules usually have 13 protofilaments but different protofilament numbers can be found in some organisms and specialized cells. It depends on Mg(2+) as a cofactor. In terms of processing, some glutamate residues at the C-terminus are polyglycylated, resulting in polyglycine chains on the gamma-carboxyl group. Glycylation is mainly limited to tubulin incorporated into axonemes (cilia and flagella) whereas glutamylation is prevalent in neuronal cells, centrioles, axonemes, and the mitotic spindle. Both modifications can coexist on the same protein on adjacent residues, and lowering polyglycylation levels increases polyglutamylation, and reciprocally. The precise function of polyglycylation is still unclear. Post-translationally, some glutamate residues at the C-terminus are polyglutamylated, resulting in polyglutamate chains on the gamma-carboxyl group. Polyglutamylation plays a key role in microtubule severing by spastin (SPAST). SPAST preferentially recognizes and acts on microtubules decorated with short polyglutamate tails: severing activity by SPAST increases as the number of glutamates per tubulin rises from one to eight, but decreases beyond this glutamylation threshold.

The protein localises to the cytoplasm. The protein resides in the cytoskeleton. The enzyme catalyses GTP + H2O = GDP + phosphate + H(+). Tubulin is the major constituent of microtubules, a cylinder consisting of laterally associated linear protofilaments composed of alpha- and beta-tubulin heterodimers. Microtubules grow by the addition of GTP-tubulin dimers to the microtubule end, where a stabilizing cap forms. Below the cap, tubulin dimers are in GDP-bound state, owing to GTPase activity of alpha-tubulin. This Gallus gallus (Chicken) protein is Tubulin alpha-8 chain.